We begin with the raw amino-acid sequence, 174 residues long: NADH-ubiquinone oxidoreductase chain 6 (174 aa).

The next 6 membrane-spanning stretches (helical) occupy residues 1-21 (MTYA…GFSS), 24-44 (SPIY…AVIL), 47-67 (GGGY…MVVF), 86-106 (VEVL…VLWV), 111-131 (GVVV…EGEG), and 151-171 (WLVV…IEIA).

It belongs to the complex I subunit 6 family. As to quaternary structure, core subunit of respiratory chain NADH dehydrogenase (Complex I) which is composed of 45 different subunits.

Its subcellular location is the mitochondrion inner membrane. The catalysed reaction is a ubiquinone + NADH + 5 H(+)(in) = a ubiquinol + NAD(+) + 4 H(+)(out). Functionally, core subunit of the mitochondrial membrane respiratory chain NADH dehydrogenase (Complex I) which catalyzes electron transfer from NADH through the respiratory chain, using ubiquinone as an electron acceptor. Essential for the catalytic activity and assembly of complex I. In Pongo abelii (Sumatran orangutan), this protein is NADH-ubiquinone oxidoreductase chain 6 (MT-ND6).